A 374-amino-acid chain; its full sequence is LRR repeats and ubiquitin-like domain-containing protein At2g30105 (374 aa).

Residues 13–87 (IKLTVKFGGK…LMLMASQGLH (75 aa)) enclose the Ubiquitin-like domain. LRR repeat units lie at residues 128-151 (WKAT…VWDC), 152-175 (GSGV…ISSF), 177-200 (SMQK…GIAS), 201-224 (LKRL…MGSL), 225-248 (TSLR…GLLT), 250-270 (LEIL…IGNC), 272-293 (FLME…FTKL), 294-316 (RNLK…LFKM), and 318-340 (LQLS…QFEG).

The sequence is that of LRR repeats and ubiquitin-like domain-containing protein At2g30105 from Arabidopsis thaliana (Mouse-ear cress).